Here is a 134-residue protein sequence, read N- to C-terminus: Arsenate reductase (134 aa).

Active-site nucleophile residues include cysteine 11, cysteine 83, and cysteine 90. Disulfide bonds link cysteine 11/cysteine 83 and cysteine 83/cysteine 90.

The protein belongs to the low molecular weight phosphotyrosine protein phosphatase family. Thioredoxin-coupled ArsC subfamily.

It localises to the cytoplasm. It carries out the reaction arsenate + [thioredoxin]-dithiol + H(+) = arsenite + [thioredoxin]-disulfide + H2O. Catalyzes the reduction of arsenate [As(V)] to arsenite [As(III)]. This chain is Arsenate reductase, found in Bacillus cereus (strain 03BB102).